The chain runs to 103 residues: Putative double-stranded DNA mimic protein HD_0986 (103 aa).

Belongs to the putative dsDNA mimic protein family.

May act as a double-stranded DNA (dsDNA) mimic. Probably regulates the activity of a dsDNA-binding protein. This Haemophilus ducreyi (strain 35000HP / ATCC 700724) protein is Putative double-stranded DNA mimic protein HD_0986.